Reading from the N-terminus, the 100-residue chain is Urease subunit gamma (100 aa).

The protein belongs to the urease gamma subunit family. Heterotrimer of UreA (gamma), UreB (beta) and UreC (alpha) subunits. Three heterotrimers associate to form the active enzyme.

It localises to the cytoplasm. It catalyses the reaction urea + 2 H2O + H(+) = hydrogencarbonate + 2 NH4(+). It functions in the pathway nitrogen metabolism; urea degradation; CO(2) and NH(3) from urea (urease route): step 1/1. The polypeptide is Urease subunit gamma (Verminephrobacter eiseniae (strain EF01-2)).